A 372-amino-acid chain; its full sequence is Phospho-N-acetylmuramoyl-pentapeptide-transferase (372 aa).

Helical transmembrane passes span 2-22 (LVWL…VSSL), 71-91 (TPTM…LLWA), 98-118 (VWIL…DDWL), 134-154 (YFWL…IATL), 176-196 (MIPF…YFVI), 211-231 (GLAI…AYVS), 251-271 (VIIV…FNAH), 275-295 (VFMG…IAVM), 300-320 (IAFA…MLQV), and 349-369 (QVVA…LMTL).

This sequence belongs to the glycosyltransferase 4 family. MraY subfamily. Requires Mg(2+) as cofactor.

Its subcellular location is the cell inner membrane. It catalyses the reaction UDP-N-acetyl-alpha-D-muramoyl-L-alanyl-gamma-D-glutamyl-meso-2,6-diaminopimeloyl-D-alanyl-D-alanine + di-trans,octa-cis-undecaprenyl phosphate = di-trans,octa-cis-undecaprenyl diphospho-N-acetyl-alpha-D-muramoyl-L-alanyl-D-glutamyl-meso-2,6-diaminopimeloyl-D-alanyl-D-alanine + UMP. It functions in the pathway cell wall biogenesis; peptidoglycan biosynthesis. In terms of biological role, catalyzes the initial step of the lipid cycle reactions in the biosynthesis of the cell wall peptidoglycan: transfers peptidoglycan precursor phospho-MurNAc-pentapeptide from UDP-MurNAc-pentapeptide onto the lipid carrier undecaprenyl phosphate, yielding undecaprenyl-pyrophosphoryl-MurNAc-pentapeptide, known as lipid I. The sequence is that of Phospho-N-acetylmuramoyl-pentapeptide-transferase from Psychrobacter cryohalolentis (strain ATCC BAA-1226 / DSM 17306 / VKM B-2378 / K5).